The following is a 1077-amino-acid chain: Carbamoyl phosphate synthase large chain (1077 aa).

A carboxyphosphate synthetic domain region spans residues 2–403 (PKRTDIKSIL…SLQKALRGLE (402 aa)). The ATP site is built by R129, R169, G175, G176, E208, L210, E215, G241, I242, H243, Q285, and E299. Positions 133-328 (DIAMKKIGLD…IAKIAAKLAV (196 aa)) constitute an ATP-grasp 1 domain. Positions 285, 299, and 301 each coordinate Mg(2+). 3 residues coordinate Mn(2+): Q285, E299, and N301. An oligomerization domain region spans residues 404-553 (VGATGFDPKV…YSTYEEECES (150 aa)). Residues 554 to 936 (NPTSDRPKVM…AFSKAMLGSQ (383 aa)) are carbamoyl phosphate synthetic domain. In terms of domain architecture, ATP-grasp 2 spans 679 to 870 (QQAVNRLGLK…LAKIAARVMV (192 aa)). ATP-binding residues include R715, R754, L756, E761, G786, V787, H788, S789, Q829, and E841. Positions 829, 841, and 843 each coordinate Mg(2+). Mn(2+)-binding residues include Q829, E841, and N843. In terms of domain architecture, MGS-like spans 937–1077 (SGMKKSGRAL…MHAKIKNMKA (141 aa)). Residues 937 to 1077 (SGMKKSGRAL…MHAKIKNMKA (141 aa)) are allosteric domain.

The protein belongs to the CarB family. Composed of two chains; the small (or glutamine) chain promotes the hydrolysis of glutamine to ammonia, which is used by the large (or ammonia) chain to synthesize carbamoyl phosphate. Tetramer of heterodimers (alpha,beta)4. The cofactor is Mg(2+). It depends on Mn(2+) as a cofactor.

It carries out the reaction hydrogencarbonate + L-glutamine + 2 ATP + H2O = carbamoyl phosphate + L-glutamate + 2 ADP + phosphate + 2 H(+). The catalysed reaction is hydrogencarbonate + NH4(+) + 2 ATP = carbamoyl phosphate + 2 ADP + phosphate + 2 H(+). It participates in amino-acid biosynthesis; L-arginine biosynthesis; carbamoyl phosphate from bicarbonate: step 1/1. The protein operates within pyrimidine metabolism; UMP biosynthesis via de novo pathway; (S)-dihydroorotate from bicarbonate: step 1/3. Functionally, large subunit of the glutamine-dependent carbamoyl phosphate synthetase (CPSase). CPSase catalyzes the formation of carbamoyl phosphate from the ammonia moiety of glutamine, carbonate, and phosphate donated by ATP, constituting the first step of 2 biosynthetic pathways, one leading to arginine and/or urea and the other to pyrimidine nucleotides. The large subunit (synthetase) binds the substrates ammonia (free or transferred from glutamine from the small subunit), hydrogencarbonate and ATP and carries out an ATP-coupled ligase reaction, activating hydrogencarbonate by forming carboxy phosphate which reacts with ammonia to form carbamoyl phosphate. The protein is Carbamoyl phosphate synthase large chain of Yersinia pestis.